The following is a 177-amino-acid chain: Large ribosomal subunit protein uL6 (177 aa).

It belongs to the universal ribosomal protein uL6 family. Part of the 50S ribosomal subunit.

In terms of biological role, this protein binds to the 23S rRNA, and is important in its secondary structure. It is located near the subunit interface in the base of the L7/L12 stalk, and near the tRNA binding site of the peptidyltransferase center. The polypeptide is Large ribosomal subunit protein uL6 (Bartonella henselae (strain ATCC 49882 / DSM 28221 / CCUG 30454 / Houston 1) (Rochalimaea henselae)).